The primary structure comprises 142 residues: AP-2 complex subunit sigma (142 aa).

This sequence belongs to the adaptor complexes small subunit family. As to quaternary structure, adaptor protein complex 2 (AP-2) is a heterotetramer composed of two large adaptins (alpha-type and beta-type subunits), a medium adaptin (mu-type subunit) and a small adaptin (sigma-type subunit).

The protein resides in the cell membrane. It is found in the membrane. The protein localises to the coated pit. Functionally, subunit of the adaptor protein complex 2 (AP-2). Adaptor protein complexes function in protein transport via transport vesicles in different membrane traffic pathways. Adaptor protein complexes are vesicle coat components and appear to be involved in cargo selection and vesicle formation. AP-2 is involved in clathrin-dependent endocytosis in which cargo proteins are incorporated into vesicles surrounded by clathrin (clathrin-coated vesicles, CCVs) which are destined for fusion with the early endosome. The complex binds polyphosphoinositides. In Arabidopsis thaliana (Mouse-ear cress), this protein is AP-2 complex subunit sigma (AP17).